The following is a 628-amino-acid chain: tRNA uridine 5-carboxymethylaminomethyl modification enzyme MnmG (628 aa).

Residues 14–19 (GAGHAG), valine 126, and serine 181 each bind FAD. 273-287 (GPRYCPSIEDKVVRF) provides a ligand contact to NAD(+). Residue glutamine 370 coordinates FAD.

It belongs to the MnmG family. In terms of assembly, homodimer. Heterotetramer of two MnmE and two MnmG subunits. FAD serves as cofactor.

The protein localises to the cytoplasm. In terms of biological role, NAD-binding protein involved in the addition of a carboxymethylaminomethyl (cmnm) group at the wobble position (U34) of certain tRNAs, forming tRNA-cmnm(5)s(2)U34. The sequence is that of tRNA uridine 5-carboxymethylaminomethyl modification enzyme MnmG from Exiguobacterium sibiricum (strain DSM 17290 / CCUG 55495 / CIP 109462 / JCM 13490 / 255-15).